Reading from the N-terminus, the 422-residue chain is L-cysteine:1D-myo-inositol 2-amino-2-deoxy-alpha-D-glucopyranoside ligase (422 aa).

Cysteine 43 contributes to the Zn(2+) binding site. Residues 43–46 (CGIT), threonine 58, and 81–83 (NVT) contribute to the L-cysteinyl-5'-AMP site. The 'HIGH' region motif lies at 45-55 (ITPYDATHLGH). Basic and acidic residues predominate over residues 185–200 (AERGGDPDRPGKRNRL). The disordered stretch occupies residues 185-221 (AERGGDPDRPGKRNRLDPMLWRGRRPGEPSWPGPRGV). The 'ERGGDP' region signature appears at 186–191 (ERGGDP). Position 227 (tryptophan 227) interacts with L-cysteinyl-5'-AMP. A Zn(2+)-binding site is contributed by cysteine 231. 249–251 (GSD) lines the L-cysteinyl-5'-AMP pocket. Histidine 256 serves as a coordination point for Zn(2+). Isoleucine 288 provides a ligand contact to L-cysteinyl-5'-AMP. Positions 294-298 (KMSKS) match the 'KMSKS' region motif.

Belongs to the class-I aminoacyl-tRNA synthetase family. MshC subfamily. In terms of assembly, monomer. The cofactor is Zn(2+).

It carries out the reaction 1D-myo-inositol 2-amino-2-deoxy-alpha-D-glucopyranoside + L-cysteine + ATP = 1D-myo-inositol 2-(L-cysteinylamino)-2-deoxy-alpha-D-glucopyranoside + AMP + diphosphate + H(+). Catalyzes the ATP-dependent condensation of GlcN-Ins and L-cysteine to form L-Cys-GlcN-Ins. The protein is L-cysteine:1D-myo-inositol 2-amino-2-deoxy-alpha-D-glucopyranoside ligase of Geodermatophilus obscurus (strain ATCC 25078 / DSM 43160 / JCM 3152 / CCUG 61914 / KCC A-0152 / KCTC 9177 / NBRC 13315 / NRRL B-3577 / G-20).